Reading from the N-terminus, the 122-residue chain is MIQQETTLNVADNSGAKRLLCIRVIGGGNRRYGGVGDVIIATVKDATPNMPVKKSDVVRAVIVRTRKSICRESGMSIRFDDNAAVLINPDGNPRGTRVFGPVARELRDKSFTKIVSLAPEVL.

The protein belongs to the universal ribosomal protein uL14 family. Part of the 50S ribosomal subunit. Forms a cluster with proteins L3 and L19. In the 70S ribosome, L14 and L19 interact and together make contacts with the 16S rRNA in bridges B5 and B8.

In terms of biological role, binds to 23S rRNA. Forms part of two intersubunit bridges in the 70S ribosome. This is Large ribosomal subunit protein uL14 from Acaryochloris marina (strain MBIC 11017).